A 344-amino-acid chain; its full sequence is Beta-1,4-galactosyltransferase 4 (344 aa).

Topologically, residues 1–12 (MGCNPPYLLSYR) are cytoplasmic. Residues 13 to 38 (LRLLLLFTLCLTVLGWATSNYFVGAI) form a helical; Signal-anchor for type II membrane protein membrane-spanning segment. Residues 39-344 (QVIPRAKNFM…NITVDFWTAA (306 aa)) are Lumenal-facing. A disulfide bridge links C77 with C118. UDP-alpha-D-galactose-binding positions include 129 to 133 (PHRNR), 168 to 170 (FNR), and 195 to 196 (VD). C189 and C208 are oxidised to a cystine. D196 serves as a coordination point for Mn(2+). N-linked (GlcNAc...) asparagine glycosylation occurs at N220. 2 residues coordinate UDP-alpha-D-galactose: Y224 and W256. N-acetyl-D-glucosamine is bound at residue 258–261 (GEDD). A Mn(2+)-binding site is contributed by H289. Position 289 to 291 (289 to 291 (HTR)) interacts with UDP-alpha-D-galactose. Residue R301 participates in N-acetyl-D-glucosamine binding. N335 carries N-linked (GlcNAc...) asparagine glycosylation.

This sequence belongs to the glycosyltransferase 7 family. As to quaternary structure, interacts with SLC35A2/UGT1. Mn(2+) serves as cofactor.

The protein localises to the golgi apparatus membrane. It is found in the secreted. The catalysed reaction is N-acetyl-D-glucosamine + UDP-alpha-D-galactose = beta-D-galactosyl-(1-&gt;4)-N-acetyl-D-glucosamine + UDP + H(+). The enzyme catalyses a beta-D-GlcNAc-(1-&gt;3)-beta-D-Gal-(1-&gt;4)-beta-D-Glc-(1&lt;-&gt;1)-Cer(d18:1(4E)) + UDP-alpha-D-galactose = a neolactoside nLc4Cer(d18:1(4E)) + UDP + H(+). It catalyses the reaction 3-O-{beta-D-galactosyl-(1-&gt;3)-[6-O-sulfo-N-acetyl-beta-D-glucosaminyl-(1-&gt;6)]-N-acetyl-alpha-D-galactosaminyl}-L-seryl-[protein] + UDP-alpha-D-galactose = 3-O-{beta-D-galactosyl-(1-&gt;3)-[beta-D-galactosyl-(1-&gt;4)-6-O-sulfo-N-acetyl-beta-D-glucosaminyl-(1-&gt;6)]-N-acetyl-alpha-D-galactosaminyl}-L-seryl-[protein] + UDP + H(+). It carries out the reaction 3-O-{beta-D-galactosyl-(1-&gt;3)-[6-O-sulfo-N-acetyl-beta-D-glucosaminyl-(1-&gt;6)]-N-acetyl-alpha-D-galactosaminyl}-L-threonyl-[protein] + UDP-alpha-D-galactose = 3-O-{beta-D-galactosyl-(1-&gt;3)-[beta-D-galactosyl-(1-&gt;4)-6-O-sulfo-N-acetyl-beta-D-glucosaminyl-(1-&gt;6)]-N-acetyl-alpha-D-galactosaminyl}-L-threonyl-[protein] + UDP + H(+). It functions in the pathway protein modification; protein glycosylation. It participates in glycolipid biosynthesis. Its function is as follows. Galactose (Gal) transferase involved in the synthesis of terminal N-acetyllactosamine (LacNac) unit present on glycan chains of glycoproteins and glycosphingolipids. Catalyzes the transfer of Gal residue via a beta1-&gt;4 linkage from UDP-Gal to the non-reducing terminal N-acetyl glucosamine 6-O-sulfate (6-O-sulfoGlcNAc) in the linearly growing chain of both N- and O-linked keratan sulfate proteoglycans. Cooperates with B3GNT7 N-acetyl glucosamine transferase and CHST6 and CHST1 sulfotransferases to construct and elongate mono- and disulfated disaccharide units [-&gt;3Galbeta1-&gt;4(6-sulfoGlcNAcbeta)1-&gt;] and [-&gt;3(6-sulfoGalbeta)1-&gt;4(6-sulfoGlcNAcbeta)1-&gt;] within keratan sulfate polymer. Transfers Gal residue via a beta1-&gt;4 linkage to terminal 6-O-sulfoGlcNAc within the LacNac unit of core 2 O-glycans forming 6-sulfo-sialyl-Lewis X (sLex). May contribute to the generation of sLex epitope on mucin-type glycoproteins that serve as ligands for SELL/L-selectin, a major regulator of leukocyte migration. In the biosynthesis pathway of neolacto-series glycosphingolipids, transfers Gal residue via a beta1-&gt;4 linkage to terminal GlcNAc of a lactotriaosylceramide (Lc3Cer) acceptor to form a neolactotetraosylceramide. The protein is Beta-1,4-galactosyltransferase 4 (B4galt4) of Rattus norvegicus (Rat).